We begin with the raw amino-acid sequence, 396 residues long: Elongation factor Tu (396 aa).

The tr-type G domain maps to 10 to 206 (KLHVNVGTIG…ALDTHIPNPE (197 aa)). The G1 stretch occupies residues 19 to 26 (GHVDHGKT). 19 to 26 (GHVDHGKT) contributes to the GTP binding site. T26 contacts Mg(2+). Positions 60-64 (GITIS) are G2. Residues 81–84 (DCPG) are G3. GTP contacts are provided by residues 81 to 85 (DCPGH) and 136 to 139 (NKAD). Positions 136 to 139 (NKAD) are G4. The interval 174-176 (SAL) is G5.

The protein belongs to the TRAFAC class translation factor GTPase superfamily. Classic translation factor GTPase family. EF-Tu/EF-1A subfamily. As to quaternary structure, monomer.

The protein resides in the cytoplasm. It catalyses the reaction GTP + H2O = GDP + phosphate + H(+). In terms of biological role, GTP hydrolase that promotes the GTP-dependent binding of aminoacyl-tRNA to the A-site of ribosomes during protein biosynthesis. This chain is Elongation factor Tu, found in Xylella fastidiosa (strain Temecula1 / ATCC 700964).